A 132-amino-acid polypeptide reads, in one-letter code: NADH-quinone oxidoreductase subunit A (132 aa).

3 helical membrane-spanning segments follow: residues 14–34 (FFTF…ISWI), 66–86 (FYLV…LYAW), and 96–116 (IGFI…IYLI).

The protein belongs to the complex I subunit 3 family. NDH-1 is composed of 13 different subunits. Subunits NuoA, H, J, K, L, M, N constitute the membrane sector of the complex.

The protein localises to the cell membrane. The enzyme catalyses a quinone + NADH + 5 H(+)(in) = a quinol + NAD(+) + 4 H(+)(out). Its function is as follows. NDH-1 shuttles electrons from NADH, via FMN and iron-sulfur (Fe-S) centers, to quinones in the respiratory chain. The immediate electron acceptor for the enzyme in this species is believed to be ubiquinone. Couples the redox reaction to proton translocation (for every two electrons transferred, four hydrogen ions are translocated across the cytoplasmic membrane), and thus conserves the redox energy in a proton gradient. The polypeptide is NADH-quinone oxidoreductase subunit A (Buchnera aphidicola subsp. Baizongia pistaciae (strain Bp)).